The following is a 189-amino-acid chain: Large ribosomal subunit protein eL18 (189 aa).

This sequence belongs to the eukaryotic ribosomal protein eL18 family.

It localises to the cytoplasm. This is Large ribosomal subunit protein eL18 (RpL18) from Drosophila pseudoobscura pseudoobscura (Fruit fly).